Here is a 304-residue protein sequence, read N- to C-terminus: uncharacterized protein (304 aa).

Residues glycine 136–isoleucine 137, valine 215–arginine 217, and aspartate 241 each bind NAD(+). Arginine 217 is a catalytic residue. The active site involves glutamate 246. The active-site Proton donor is histidine 265. Histidine 265 to asparagine 268 provides a ligand contact to NAD(+).

This sequence belongs to the D-isomer specific 2-hydroxyacid dehydrogenase family.

This is an uncharacterized protein from Corynebacterium melassecola.